We begin with the raw amino-acid sequence, 55 residues long: Large ribosomal subunit protein bL32 (55 aa).

Residues 1–27 are disordered; it reads MAVQQNKPTRSKRGMRRSHDALTTATL.

Belongs to the bacterial ribosomal protein bL32 family.

The protein is Large ribosomal subunit protein bL32 of Yersinia enterocolitica serotype O:8 / biotype 1B (strain NCTC 13174 / 8081).